The chain runs to 673 residues: Beta-galactosidase 8 (673 aa).

A signal peptide spans 1-20 (MGPSRSFQNLLLLLLPLALA). The N-linked (GlcNAc...) asparagine glycan is linked to N38. E189 (proton donor) is an active-site residue. N230 carries N-linked (GlcNAc...) asparagine glycosylation. E272 acts as the Nucleophile in catalysis. N304, N329, N401, N489, and N540 each carry an N-linked (GlcNAc...) asparagine glycan.

It belongs to the glycosyl hydrolase 35 family.

The protein resides in the secreted. It is found in the extracellular space. The protein localises to the apoplast. The enzyme catalyses Hydrolysis of terminal non-reducing beta-D-galactose residues in beta-D-galactosides.. This chain is Beta-galactosidase 8, found in Oryza sativa subsp. japonica (Rice).